The primary structure comprises 68 residues: Small integral membrane protein 10-like protein 3 (68 aa).

In Homo sapiens (Human), this protein is Small integral membrane protein 10-like protein 3.